Consider the following 417-residue polypeptide: Aminoacyltransferase FemA (417 aa).

The protein belongs to the FemABX family.

It is found in the cytoplasm. It carries out the reaction beta-D-GlcNAc-(1-&gt;4)-Mur2Ac(oyl-L-Ala-D-isoglutaminyl-L-Lys-(N(6)-Gly)-D-Ala-D-Ala)-di-trans,octa-cis-undecaprenyl diphosphate + 2 glycyl-tRNA(Gly) = MurNAc-L-Ala-D-isoglutaminyl-L-Lys-(N(6)-tri-Gly)-D-Ala-D-Ala-diphospho-di-trans,octa-cis-undecaprenyl-GlcNAc + 2 tRNA(Gly) + 2 H(+). Catalyzes the incorporation of amino acid(s) into the interchain peptide bridge of peptidoglycan, using aminoacyl-tRNA as amino acid donor. The chain is Aminoacyltransferase FemA (femA) from Staphylococcus epidermidis.